The sequence spans 508 residues: Adenylosuccinate synthetase 1, chloroplastic (508 aa).

A chloroplast-targeting transit peptide spans 1–56 (MNISILRLDSNPITTATSPATATANHRSGILGCYNGTYSCRLNQLQQRKKNPSIIV). GTP is bound by residues 95 to 101 (GDEGKGK) and 123 to 125 (GHT). Aspartate 96 acts as the Proton acceptor in catalysis. Residues aspartate 96 and glycine 123 each coordinate Mg(2+). Residues 96 to 99 (DEGK), 121 to 124 (NAGH), threonine 213, arginine 227, glutamine 307, threonine 322, and arginine 386 contribute to the IMP site. Histidine 124 serves as the catalytic Proton donor. 382–388 (TTTGRPR) provides a ligand contact to substrate. Residues arginine 388, 414 to 416 (KLD), and 497 to 499 (GIG) each bind GTP.

This sequence belongs to the adenylosuccinate synthetase family. In terms of assembly, homodimer. Mg(2+) is required as a cofactor.

The protein resides in the plastid. It is found in the chloroplast. The enzyme catalyses IMP + L-aspartate + GTP = N(6)-(1,2-dicarboxyethyl)-AMP + GDP + phosphate + 2 H(+). It functions in the pathway purine metabolism; AMP biosynthesis via de novo pathway; AMP from IMP: step 1/2. Its function is as follows. Plays an important role in the de novo pathway and in the salvage pathway of purine nucleotide biosynthesis. Catalyzes the first committed step in the biosynthesis of AMP from IMP. The protein is Adenylosuccinate synthetase 1, chloroplastic of Capsicum frutescens (Cayenne pepper).